Consider the following 473-residue polypeptide: Photosystem II CP43 reaction center protein (473 aa).

The propeptide occupies 1-14; that stretch reads MKILYSLRRFYHVE. N-acetylthreonine is present on threonine 15. A Phosphothreonine modification is found at threonine 15. The next 5 membrane-spanning stretches (helical) occupy residues 69 to 93, 134 to 155, 178 to 200, 255 to 275, and 291 to 312; these read LFEVAHFVPEKPMYEQGLILLPHLA, LLGPETLEESFPFFGYVWKDRN, KALYFGGVYDTWAPGGGDVRKIT, KPFAWARRAFVWSGEAYLSYS, and WFNNTAYSSEFYGPTGPEASQA. Glutamate 367 contacts [CaMn4O5] cluster. Residues 447–471 form a helical membrane-spanning segment; it reads RARAAAAGFEKGIDRDLEPVLYMNP.

The protein belongs to the PsbB/PsbC family. PsbC subfamily. As to quaternary structure, PSII is composed of 1 copy each of membrane proteins PsbA, PsbB, PsbC, PsbD, PsbE, PsbF, PsbH, PsbI, PsbJ, PsbK, PsbL, PsbM, PsbT, PsbX, PsbY, PsbZ, Psb30/Ycf12, at least 3 peripheral proteins of the oxygen-evolving complex and a large number of cofactors. It forms dimeric complexes. Binds multiple chlorophylls and provides some of the ligands for the Ca-4Mn-5O cluster of the oxygen-evolving complex. It may also provide a ligand for a Cl- that is required for oxygen evolution. PSII binds additional chlorophylls, carotenoids and specific lipids. is required as a cofactor. Post-translationally, phosphorylated on threonine residue(s); phosphorylation increases with increasing light levels.

The protein localises to the plastid. It localises to the chloroplast thylakoid membrane. In terms of biological role, one of the components of the core complex of photosystem II (PSII). It binds chlorophyll and helps catalyze the primary light-induced photochemical processes of PSII. PSII is a light-driven water:plastoquinone oxidoreductase, using light energy to abstract electrons from H(2)O, generating O(2) and a proton gradient subsequently used for ATP formation. The chain is Photosystem II CP43 reaction center protein from Secale cereale (Rye).